Consider the following 308-residue polypeptide: Probable peptidyl-prolyl cis-trans isomerase B (308 aa).

A disordered region spans residues 74–123 (DHQSTTSATPTDSASTSPPQAATAPPLPPFKPSANLGANCQYPPSPDKAV). The span at 77–97 (STTSATPTDSASTSPPQAATA) shows a compositional bias: low complexity. Positions 139 to 307 (AQVSVSMVTN…TEVTITSVLL (169 aa)) constitute a PPIase cyclophilin-type domain.

This sequence belongs to the cyclophilin-type PPIase family.

It catalyses the reaction [protein]-peptidylproline (omega=180) = [protein]-peptidylproline (omega=0). Its function is as follows. PPIases accelerate the folding of proteins. It catalyzes the cis-trans isomerization of proline imidic peptide bonds in oligopeptides. This chain is Probable peptidyl-prolyl cis-trans isomerase B (ppiB), found in Mycobacterium tuberculosis (strain CDC 1551 / Oshkosh).